A 702-amino-acid chain; its full sequence is Elongation factor G (702 aa).

A tr-type G domain is found at 8–290 (TRYRNIGISA…AVIEYLPAPT (283 aa)). GTP contacts are provided by residues 17–24 (AHIDAGKT), 88–92 (DTPGH), and 142–145 (NKMD).

Belongs to the TRAFAC class translation factor GTPase superfamily. Classic translation factor GTPase family. EF-G/EF-2 subfamily.

The protein resides in the cytoplasm. In terms of biological role, catalyzes the GTP-dependent ribosomal translocation step during translation elongation. During this step, the ribosome changes from the pre-translocational (PRE) to the post-translocational (POST) state as the newly formed A-site-bound peptidyl-tRNA and P-site-bound deacylated tRNA move to the P and E sites, respectively. Catalyzes the coordinated movement of the two tRNA molecules, the mRNA and conformational changes in the ribosome. This chain is Elongation factor G, found in Erwinia tasmaniensis (strain DSM 17950 / CFBP 7177 / CIP 109463 / NCPPB 4357 / Et1/99).